The sequence spans 545 residues: External NADH-ubiquinone oxidoreductase 2, mitochondrial (545 aa).

Residues methionine 1–glutamine 21 constitute a mitochondrion transit peptide. Glutamate 99–arginine 129 provides a ligand contact to FAD. Position 260–296 (leucine 260–glutamate 296) interacts with NAD(+).

Belongs to the NADH dehydrogenase family.

It localises to the mitochondrion intermembrane space. The enzyme catalyses a quinone + NADH + H(+) = a quinol + NAD(+). It carries out the reaction a ubiquinone + NADH + H(+) = a ubiquinol + NAD(+). Functionally, external NADH dehydrogenase required for optimum cellular growth with a number of nonfermentable carbon sources, including ethanol. With NDE1, performes the mitochondrial oxidation of cytosolic NADH under these growth conditions. Regulates the mitochondrial glycerol-3-phosphate dehydrogenase, GUT2, also involved in cytosolic NADH oxidation. This chain is External NADH-ubiquinone oxidoreductase 2, mitochondrial (NDE2), found in Saccharomyces cerevisiae (strain ATCC 204508 / S288c) (Baker's yeast).